The following is a 148-amino-acid chain: Deoxyuridine 5'-triphosphate nucleotidohydrolase (148 aa).

Substrate is bound by residues 68-70 (RSG), N81, 85-87 (TID), and K95.

Belongs to the dUTPase family. Mg(2+) is required as a cofactor.

The catalysed reaction is dUTP + H2O = dUMP + diphosphate + H(+). It functions in the pathway pyrimidine metabolism; dUMP biosynthesis; dUMP from dCTP (dUTP route): step 2/2. Functionally, this enzyme is involved in nucleotide metabolism: it produces dUMP, the immediate precursor of thymidine nucleotides and it decreases the intracellular concentration of dUTP so that uracil cannot be incorporated into DNA. This chain is Deoxyuridine 5'-triphosphate nucleotidohydrolase, found in Rickettsia canadensis (strain McKiel).